The primary structure comprises 607 residues: Glutamine--fructose-6-phosphate aminotransferase [isomerizing] (607 aa).

Catalysis depends on Cys2, which acts as the Nucleophile; for GATase activity. In terms of domain architecture, Glutamine amidotransferase type-2 spans 2–217 (CGIVGIVGHS…DGDWAVVRRD (216 aa)). SIS domains are found at residues 283 to 422 (LPFD…ARGV) and 455 to 597 (IARE…VDQP). Catalysis depends on Lys602, which acts as the For Fru-6P isomerization activity.

Homodimer.

Its subcellular location is the cytoplasm. The enzyme catalyses D-fructose 6-phosphate + L-glutamine = D-glucosamine 6-phosphate + L-glutamate. Functionally, catalyzes the first step in hexosamine metabolism, converting fructose-6P into glucosamine-6P using glutamine as a nitrogen source. The polypeptide is Glutamine--fructose-6-phosphate aminotransferase [isomerizing] (Mesorhizobium japonicum (strain LMG 29417 / CECT 9101 / MAFF 303099) (Mesorhizobium loti (strain MAFF 303099))).